Reading from the N-terminus, the 272-residue chain is Shikimate dehydrogenase (NADP(+)) (272 aa).

Shikimate is bound by residues 14 to 16 (SKS) and threonine 61. Lysine 65 functions as the Proton acceptor in the catalytic mechanism. Residue glutamate 77 participates in NADP(+) binding. The shikimate site is built by asparagine 86 and aspartate 102. Residues 126–130 (GAGGA), 149–154 (NRTVSR), and methionine 213 each bind NADP(+). Tyrosine 215 is a binding site for shikimate. An NADP(+)-binding site is contributed by glycine 237.

It belongs to the shikimate dehydrogenase family. Homodimer.

The enzyme catalyses shikimate + NADP(+) = 3-dehydroshikimate + NADPH + H(+). The protein operates within metabolic intermediate biosynthesis; chorismate biosynthesis; chorismate from D-erythrose 4-phosphate and phosphoenolpyruvate: step 4/7. In terms of biological role, involved in the biosynthesis of the chorismate, which leads to the biosynthesis of aromatic amino acids. Catalyzes the reversible NADPH linked reduction of 3-dehydroshikimate (DHSA) to yield shikimate (SA). This is Shikimate dehydrogenase (NADP(+)) from Escherichia coli O139:H28 (strain E24377A / ETEC).